Reading from the N-terminus, the 203-residue chain is Glycerol-3-phosphate acyltransferase (203 aa).

Transmembrane regions (helical) follow at residues 6 to 26 (LTLA…AVLV), 56 to 76 (AAAM…YVAF), 82 to 102 (AVSL…PIFF), 118 to 138 (APIG…VVLI), and 141 to 161 (YSSL…WYFD).

The protein belongs to the PlsY family. In terms of assembly, probably interacts with PlsX.

The protein resides in the cell inner membrane. The enzyme catalyses an acyl phosphate + sn-glycerol 3-phosphate = a 1-acyl-sn-glycero-3-phosphate + phosphate. Its pathway is lipid metabolism; phospholipid metabolism. In terms of biological role, catalyzes the transfer of an acyl group from acyl-phosphate (acyl-PO(4)) to glycerol-3-phosphate (G3P) to form lysophosphatidic acid (LPA). This enzyme utilizes acyl-phosphate as fatty acyl donor, but not acyl-CoA or acyl-ACP. In Shewanella loihica (strain ATCC BAA-1088 / PV-4), this protein is Glycerol-3-phosphate acyltransferase.